The following is an 803-amino-acid chain: Leucine--tRNA ligase (803 aa).

Residues 40 to 51 (PYPSGAGLHVGH) carry the 'HIGH' region motif. A 'KMSKS' region motif is present at residues 575–579 (KMSKS). Lysine 578 lines the ATP pocket.

The protein belongs to the class-I aminoacyl-tRNA synthetase family.

Its subcellular location is the cytoplasm. It carries out the reaction tRNA(Leu) + L-leucine + ATP = L-leucyl-tRNA(Leu) + AMP + diphosphate. The polypeptide is Leucine--tRNA ligase (Listeria welshimeri serovar 6b (strain ATCC 35897 / DSM 20650 / CCUG 15529 / CIP 8149 / NCTC 11857 / SLCC 5334 / V8)).